The sequence spans 395 residues: Imidazolonepropionase (395 aa).

2 residues coordinate Fe(3+): histidine 63 and histidine 65. 2 residues coordinate Zn(2+): histidine 63 and histidine 65. 4-imidazolone-5-propanoate contacts are provided by arginine 72, tyrosine 135, and histidine 168. Tyrosine 135 serves as a coordination point for N-formimidoyl-L-glutamate. Histidine 233 is a Fe(3+) binding site. Zn(2+) is bound at residue histidine 233. Glutamine 236 is a 4-imidazolone-5-propanoate binding site. Aspartate 308 lines the Fe(3+) pocket. Residue aspartate 308 coordinates Zn(2+). 2 residues coordinate N-formimidoyl-L-glutamate: asparagine 310 and glycine 312. Threonine 313 contributes to the 4-imidazolone-5-propanoate binding site.

Belongs to the metallo-dependent hydrolases superfamily. HutI family. Requires Zn(2+) as cofactor. It depends on Fe(3+) as a cofactor.

It localises to the cytoplasm. The enzyme catalyses 4-imidazolone-5-propanoate + H2O = N-formimidoyl-L-glutamate. It functions in the pathway amino-acid degradation; L-histidine degradation into L-glutamate; N-formimidoyl-L-glutamate from L-histidine: step 3/3. Catalyzes the hydrolytic cleavage of the carbon-nitrogen bond in imidazolone-5-propanoate to yield N-formimidoyl-L-glutamate. It is the third step in the universal histidine degradation pathway. The sequence is that of Imidazolonepropionase from Cereibacter sphaeroides (strain ATCC 17029 / ATH 2.4.9) (Rhodobacter sphaeroides).